The sequence spans 1574 residues: Synaptojanin-1 (1574 aa).

The region spanning 119–442 (VRKVLNSGNF…GDSISKIYAG (324 aa)) is the SAC domain. Residues S820 and S830 each carry the phosphoserine modification. One can recognise an RRM domain in the interval 894–971 (GTVLVSIKSS…RTITITLKSP (78 aa)). Residues 1029-1054 (HLQPSSSSGLGTSPSSSPRTSPCQSP) are compositionally biased toward low complexity. The disordered stretch occupies residues 1029–1327 (HLQPSSSSGL…GVKQEPTLKS (299 aa)). A Phosphoserine modification is found at S1053. Positions 1080 to 1100 (SSQGSPVDTQPAAQKDSSQTL) are enriched in polar residues. Residues 1105–1127 (PPPPRPVAPPARPAPPQRPPPPS) are compositionally biased toward pro residues. Phosphoserine occurs at positions 1147 and 1175. Residue R1198 is modified to Omega-N-methylarginine. A Phosphothreonine modification is found at T1217. A compositionally biased stretch (pro residues) spans 1268 to 1287 (TMPPSGPQPNLETPPQPPPR). The span at 1288 to 1307 (SRSSQSLPSDSSPQLQQEQP) shows a compositional bias: low complexity. Phosphoserine is present on residues S1290 and S1350. T1354 is subject to Phosphothreonine. 2 disordered regions span residues 1363–1507 (LPSA…SVCP) and 1532–1574 (LPAR…FTER). Composition is skewed to polar residues over residues 1364–1379 (PSAS…SVSC), 1393–1402 (QESMGSSANP), 1424–1436 (RVQS…TSWL), and 1472–1484 (DLQS…TSNP). The tract at residues 1403-1425 (FPSLPCRNPFTDRTAAPGNPFRV) is 3 X 3 AA repeats of N-P-F. Pro residues predominate over residues 1535–1548 (RRPPPPPPPVPLLP). Positions 1549–1563 (PGTTSSAGPSTTLPS) are enriched in low complexity. A compositionally biased stretch (polar residues) spans 1565-1574 (APSTLDFTER).

This sequence belongs to the synaptojanin family. It in the central section; belongs to the inositol 1,4,5-trisphosphate 5-phosphatase family. Interacts with ASH/GRB2. Interacts with PACSIN1, PACSIN2 and PACSIN3. Interacts with AMPH, SH3GL1, SH3GL2 and SH3GL3. Interacts with MYO1E (via SH3 domain). Interacts with BIN1 and DNM1. Interacts with EPS15.

It is found in the cytoplasm. It localises to the perinuclear region. It catalyses the reaction a 1,2-diacyl-sn-glycero-3-phospho-(1D-myo-inositol-4,5-bisphosphate) + H2O = a 1,2-diacyl-sn-glycero-3-phospho-(1D-myo-inositol 4-phosphate) + phosphate. Its function is as follows. Phosphatase that acts on various phosphoinositides, including phosphatidylinositol 4-phosphate, phosphatidylinositol (4,5)-bisphosphate and phosphatidylinositol (3,4,5)-trisphosphate. Has a role in clathrin-mediated endocytosis. Hydrolyzes PIP2 bound to actin regulatory proteins resulting in the rearrangement of actin filaments downstream of tyrosine kinase and ASH/GRB2. This Mus musculus (Mouse) protein is Synaptojanin-1 (Synj1).